A 74-amino-acid polypeptide reads, in one-letter code: Exodeoxyribonuclease 7 small subunit (74 aa).

Belongs to the XseB family. In terms of assembly, heterooligomer composed of large and small subunits.

Its subcellular location is the cytoplasm. It catalyses the reaction Exonucleolytic cleavage in either 5'- to 3'- or 3'- to 5'-direction to yield nucleoside 5'-phosphates.. Bidirectionally degrades single-stranded DNA into large acid-insoluble oligonucleotides, which are then degraded further into small acid-soluble oligonucleotides. This Thermotoga neapolitana (strain ATCC 49049 / DSM 4359 / NBRC 107923 / NS-E) protein is Exodeoxyribonuclease 7 small subunit.